The following is a 178-amino-acid chain: Large ribosomal subunit protein bL25 (178 aa).

It belongs to the bacterial ribosomal protein bL25 family. CTC subfamily. Part of the 50S ribosomal subunit; part of the 5S rRNA/L5/L18/L25 subcomplex. Contacts the 5S rRNA. Binds to the 5S rRNA independently of L5 and L18.

Functionally, this is one of the proteins that binds to the 5S RNA in the ribosome where it forms part of the central protuberance. The sequence is that of Large ribosomal subunit protein bL25 from Helicobacter pylori (strain P12).